The sequence spans 1013 residues: Antigenic heat-stable 120 kDa protein (1013 aa).

Disordered stretches follow at residues 1–73 (DTSE…TSDP) and 348–396 (GQSK…PQSQ). Residues 12-27 (EYTEEQKQKLEQEQKE) show a composition bias toward basic and acidic residues. Positions 47 to 61 (SASSAQSTPSISALS) are enriched in low complexity. Polar residues-rich tracts occupy residues 62-73 (GNISPDSQTSDP), 348-373 (GQSK…QYKQ), and 380-396 (PTNQ…PQSQ).

It localises to the cytoplasm. The polypeptide is Antigenic heat-stable 120 kDa protein (sca4) (Rickettsia rhipicephali).